Here is a 447-residue protein sequence, read N- to C-terminus: Cysteine--tRNA ligase (447 aa).

Cys28 lines the Zn(2+) pocket. Residues 30–40 (PTVYNYIHIGN) carry the 'HIGH' region motif. The Zn(2+) site is built by Cys211, His236, and Glu240. Positions 268–272 (KMSKS) match the 'KMSKS' region motif. Lys271 provides a ligand contact to ATP.

Belongs to the class-I aminoacyl-tRNA synthetase family. Monomer. The cofactor is Zn(2+).

The protein localises to the cytoplasm. It carries out the reaction tRNA(Cys) + L-cysteine + ATP = L-cysteinyl-tRNA(Cys) + AMP + diphosphate. In Streptococcus pyogenes serotype M6 (strain ATCC BAA-946 / MGAS10394), this protein is Cysteine--tRNA ligase.